Consider the following 219-residue polypeptide: Holliday junction branch migration complex subunit RuvA (219 aa).

Residues 1 to 66 (MIEYIIGKIS…NFLFEYYGFK (66 aa)) are domain I. Residues 67-148 (TLREKIFFEN…SEYNNDVNHS (82 aa)) are domain II. The tract at residues 149–154 (SINQQS) is flexible linker. Positions 155-219 (NSYNPVPDLV…EAVTNKTTVS (65 aa)) are domain III.

The protein belongs to the RuvA family. In terms of assembly, homotetramer. Forms an RuvA(8)-RuvB(12)-Holliday junction (HJ) complex. HJ DNA is sandwiched between 2 RuvA tetramers; dsDNA enters through RuvA and exits via RuvB. An RuvB hexamer assembles on each DNA strand where it exits the tetramer. Each RuvB hexamer is contacted by two RuvA subunits (via domain III) on 2 adjacent RuvB subunits; this complex drives branch migration. In the full resolvosome a probable DNA-RuvA(4)-RuvB(12)-RuvC(2) complex forms which resolves the HJ.

It localises to the cytoplasm. In terms of biological role, the RuvA-RuvB-RuvC complex processes Holliday junction (HJ) DNA during genetic recombination and DNA repair, while the RuvA-RuvB complex plays an important role in the rescue of blocked DNA replication forks via replication fork reversal (RFR). RuvA specifically binds to HJ cruciform DNA, conferring on it an open structure. The RuvB hexamer acts as an ATP-dependent pump, pulling dsDNA into and through the RuvAB complex. HJ branch migration allows RuvC to scan DNA until it finds its consensus sequence, where it cleaves and resolves the cruciform DNA. The sequence is that of Holliday junction branch migration complex subunit RuvA from Malacoplasma penetrans (strain HF-2) (Mycoplasma penetrans).